Here is a 221-residue protein sequence, read N- to C-terminus: GTP cyclohydrolase 1 (221 aa).

Zn(2+) is bound by residues cysteine 109, histidine 112, and cysteine 180.

It belongs to the GTP cyclohydrolase I family. As to quaternary structure, toroid-shaped homodecamer, composed of two pentamers of five dimers.

It catalyses the reaction GTP + H2O = 7,8-dihydroneopterin 3'-triphosphate + formate + H(+). Its pathway is cofactor biosynthesis; 7,8-dihydroneopterin triphosphate biosynthesis; 7,8-dihydroneopterin triphosphate from GTP: step 1/1. This Sodalis glossinidius (strain morsitans) protein is GTP cyclohydrolase 1.